Here is a 483-residue protein sequence, read N- to C-terminus: Altronate oxidoreductase (483 aa).

18–29 (IIQFGEGNFLRA) serves as a coordination point for NAD(+).

The protein belongs to the mannitol dehydrogenase family. UxaB subfamily.

It catalyses the reaction D-altronate + NAD(+) = keto-D-tagaturonate + NADH + H(+). Its pathway is carbohydrate metabolism; pentose and glucuronate interconversion. The chain is Altronate oxidoreductase from Shigella flexneri serotype 5b (strain 8401).